We begin with the raw amino-acid sequence, 703 residues long: Elongation factor G (703 aa).

A tr-type G domain is found at 10-286 (NKVRNIGIMA…AVVKFLPSPL (277 aa)). Residues 19–26 (AHIDAGKT), 83–87 (DTPGH), and 137–140 (NKLD) each bind GTP.

This sequence belongs to the TRAFAC class translation factor GTPase superfamily. Classic translation factor GTPase family. EF-G/EF-2 subfamily.

Its subcellular location is the cytoplasm. In terms of biological role, catalyzes the GTP-dependent ribosomal translocation step during translation elongation. During this step, the ribosome changes from the pre-translocational (PRE) to the post-translocational (POST) state as the newly formed A-site-bound peptidyl-tRNA and P-site-bound deacylated tRNA move to the P and E sites, respectively. Catalyzes the coordinated movement of the two tRNA molecules, the mRNA and conformational changes in the ribosome. The protein is Elongation factor G of Nocardioides sp. (strain ATCC BAA-499 / JS614).